The following is a 562-amino-acid chain: Scaffold protein FimL (562 aa).

In terms of assembly, interacts with PilG and FimV.

Its subcellular location is the cytoplasm. Its function is as follows. Regulates multiple virulence functions including type IV pilus (T4P)-mediated assembly and twitching motility as well as cAMP-dependent virulence gene expression. Regulates intracellular cyclic AMP (cAMP) levels through the activation of adenylate cyclase CyaB. Also functions as a scaffold linking FimV and PilG at the pole, where type IV pilus (T4P), the Chp chemosensory system and the CyaB adenylate cyclase interact. The chain is Scaffold protein FimL (fimL) from Pseudomonas aeruginosa (strain ATCC 15692 / DSM 22644 / CIP 104116 / JCM 14847 / LMG 12228 / 1C / PRS 101 / PAO1).